Here is a 291-residue protein sequence, read N- to C-terminus: 33 kDa chaperonin (291 aa).

2 disulfide bridges follow: Cys-235/Cys-237 and Cys-268/Cys-271.

The protein belongs to the HSP33 family. In terms of processing, under oxidizing conditions two disulfide bonds are formed involving the reactive cysteines. Under reducing conditions zinc is bound to the reactive cysteines and the protein is inactive.

The protein localises to the cytoplasm. Its function is as follows. Redox regulated molecular chaperone. Protects both thermally unfolding and oxidatively damaged proteins from irreversible aggregation. Plays an important role in the bacterial defense system toward oxidative stress. The polypeptide is 33 kDa chaperonin (Bacillus subtilis (strain 168)).